We begin with the raw amino-acid sequence, 1085 residues long: Translation factor GUF1 homolog, mitochondrial (1085 aa).

The tr-type G domain maps to Lys232 to Ile409. Residues Ala241–Ser248, Asp302–His306, and Asn356–Asp359 contribute to the GTP site.

This sequence belongs to the TRAFAC class translation factor GTPase superfamily. Classic translation factor GTPase family. LepA subfamily.

Its subcellular location is the mitochondrion inner membrane. The enzyme catalyses GTP + H2O = GDP + phosphate + H(+). Functionally, promotes mitochondrial protein synthesis. May act as a fidelity factor of the translation reaction, by catalyzing a one-codon backward translocation of tRNAs on improperly translocated ribosomes. Binds to mitochondrial ribosomes in a GTP-dependent manner. The polypeptide is Translation factor GUF1 homolog, mitochondrial (Plasmodium falciparum (isolate 3D7)).